The chain runs to 362 residues: Vignain (362 aa).

Positions 1-20 (MAMKKLLWVVLSLSLVLGVA) are cleaved as a signal peptide. The propeptide at 21–126 (NSFDFHEKDL…SGTFMYEKVG (106 aa)) is activation peptide. Cystine bridges form between Cys149-Cys191, Cys183-Cys224, and Cys282-Cys334. The active site involves Cys152. Active-site residues include His288 and Asn309. N-linked (GlcNAc...) asparagine glycosylation is found at Asn326 and Asn346. A propeptide spans 353–362 (GSLSSPKDEL) (removed in mature form). A Prevents secretion from ER motif is present at residues 359 to 362 (KDEL).

The protein belongs to the peptidase C1 family. Post-translationally, the mature protein is not glycosylated. In terms of processing, the precursor stored in the endoplasmic reticulum lumen is processed during the transport to proteins bodies to two dominant mature forms that differ by a single amino acid residue at the N-terminus.

Its subcellular location is the endoplasmic reticulum lumen. It localises to the vacuole. The protein resides in the aleurone grain. In terms of biological role, thought to be involved in the hydrolysis of stored seed proteins. In vitro, catalyzes the hydrolysis of proteins, such as azocasein. Shows a preferential cleavage for Asn-|-Xaa in small molecule substrates such as Boc-Asn-|-OPHNO(2). The chain is Vignain from Vigna mungo (Black gram).